Here is a 161-residue protein sequence, read N- to C-terminus: Regulatory protein RecX (161 aa).

The protein belongs to the RecX family.

It localises to the cytoplasm. In terms of biological role, modulates RecA activity. This chain is Regulatory protein RecX, found in Thermotoga petrophila (strain ATCC BAA-488 / DSM 13995 / JCM 10881 / RKU-1).